A 760-amino-acid chain; its full sequence is Catecholate siderophore receptor Fiu (760 aa).

The first 31 residues, methionine 1–alanine 31, serve as a signal peptide directing secretion. The TBDR plug domain maps to proline 67 to lysine 175. The 581-residue stretch at aspartate 180–phenylalanine 760 folds into the TBDR beta-barrel domain. Positions arginine 743–phenylalanine 760 match the TonB C-terminal box motif.

Belongs to the TonB-dependent receptor family.

It is found in the cell outer membrane. Involved in the active transport across the outer membrane of iron complexed with catecholate siderophores such as dihydroxybenzoylserine and dihydroxybenzoate. It derives its energy for transport by interacting with the trans-periplasmic membrane protein TonB. Can also transport catechol-substituted cephalosporins. Receptor for microcins M, H47 and E492. The chain is Catecholate siderophore receptor Fiu (fiu) from Escherichia coli O6:H1 (strain CFT073 / ATCC 700928 / UPEC).